The chain runs to 505 residues: ATP synthase subunit alpha, chloroplastic (505 aa).

ATP is bound at residue 170–177 (GDRQTGKT).

The protein belongs to the ATPase alpha/beta chains family. As to quaternary structure, F-type ATPases have 2 components, CF(1) - the catalytic core - and CF(0) - the membrane proton channel. CF(1) has five subunits: alpha(3), beta(3), gamma(1), delta(1), epsilon(1). CF(0) has four main subunits: a, b, b' and c.

The protein localises to the plastid. Its subcellular location is the chloroplast thylakoid membrane. It carries out the reaction ATP + H2O + 4 H(+)(in) = ADP + phosphate + 5 H(+)(out). Produces ATP from ADP in the presence of a proton gradient across the membrane. The alpha chain is a regulatory subunit. The sequence is that of ATP synthase subunit alpha, chloroplastic from Oenothera parviflora (Small-flowered evening primrose).